The chain runs to 557 residues: Arginine--tRNA ligase (557 aa).

The 'HIGH' region signature appears at 128 to 138 (ANPTGPLHVGH).

Belongs to the class-I aminoacyl-tRNA synthetase family. In terms of assembly, monomer.

The protein resides in the cytoplasm. It catalyses the reaction tRNA(Arg) + L-arginine + ATP = L-arginyl-tRNA(Arg) + AMP + diphosphate. In Thiobacillus denitrificans (strain ATCC 25259 / T1), this protein is Arginine--tRNA ligase.